The chain runs to 332 residues: 2,3-diketo-L-gulonate reductase (332 aa).

Residue His44 is the Proton donor of the active site. NAD(+) is bound by residues 168 to 174 (ITMVDMS), 224 to 225 (WK), and 304 to 306 (GHE).

This sequence belongs to the LDH2/MDH2 oxidoreductase family. DlgD subfamily. Homodimer.

The protein localises to the cytoplasm. The enzyme catalyses 3-dehydro-L-gulonate + NAD(+) = 2,3-dioxo-L-gulonate + NADH + H(+). The catalysed reaction is 3-dehydro-L-gulonate + NADP(+) = 2,3-dioxo-L-gulonate + NADPH + H(+). Catalyzes the reduction of 2,3-diketo-L-gulonate in the presence of NADH, to form 3-keto-L-gulonate. The chain is 2,3-diketo-L-gulonate reductase from Escherichia coli O17:K52:H18 (strain UMN026 / ExPEC).